A 326-amino-acid chain; its full sequence is Transposase InsH for insertion sequence element IS5H (326 aa).

The protein belongs to the transposase 11 family.

Involved in the transposition of the insertion sequence IS5. The chain is Transposase InsH for insertion sequence element IS5H (insH6) from Escherichia coli (strain K12).